Consider the following 129-residue polypeptide: Large ribosomal subunit protein uL22 (129 aa).

Belongs to the universal ribosomal protein uL22 family. As to quaternary structure, part of the 50S ribosomal subunit.

In terms of biological role, this protein binds specifically to 23S rRNA; its binding is stimulated by other ribosomal proteins, e.g. L4, L17, and L20. It is important during the early stages of 50S assembly. It makes multiple contacts with different domains of the 23S rRNA in the assembled 50S subunit and ribosome. Its function is as follows. The globular domain of the protein is located near the polypeptide exit tunnel on the outside of the subunit, while an extended beta-hairpin is found that lines the wall of the exit tunnel in the center of the 70S ribosome. This chain is Large ribosomal subunit protein uL22, found in Bartonella henselae (strain ATCC 49882 / DSM 28221 / CCUG 30454 / Houston 1) (Rochalimaea henselae).